We begin with the raw amino-acid sequence, 295 residues long: Putative enoyl reductase C646.07c (295 aa).

At 1-84 (MSITLSSRGR…KDLGPQIGWR (84 aa)) the chain is on the cytoplasmic side. The chain crosses the membrane as a helical span at residues 85–105 (TVFMIEYLGPLVIHLFFILNY). Residues 106–157 (KWIYRKDYNLCLNQKIAFVLVMLHFMKREYESIFVHRFSLATMPLRNIFKNC) lie on the Lumenal side of the membrane. The helical transmembrane segment at 158–178 (AHYHLLSGLFLAYFIYGPWHA) threads the bilayer. Residues 179–186 (NDYIKPNH) lie on the Cytoplasmic side of the membrane. The helical transmembrane segment at 187–207 (LLFLIVGWAFAVLSNFRTHII) threads the bilayer. Residues 208 to 223 (LRDLRPAGSKKRVIPT) lie on the Lumenal side of the membrane. A helical transmembrane segment spans residues 224–246 (GYGFNLVSFPNYFFESLGWLFFA). Residues 247 to 250 (LLTK) are Cytoplasmic-facing. A helical transmembrane segment spans residues 251-268 (SWASWIFLFVGSAQMFVW). The Lumenal segment spans residues 269-295 (AKKKHARYLKEFPNYPRSRKIMIPFFL).

This sequence belongs to the steroid 5-alpha reductase family.

The protein resides in the endoplasmic reticulum membrane. It catalyses the reaction a (2E)-enoyl-CoA + NADPH + H(+) = a 2,3-saturated acyl-CoA + NADP(+). The sequence is that of Putative enoyl reductase C646.07c from Schizosaccharomyces pombe (strain 972 / ATCC 24843) (Fission yeast).